Consider the following 190-residue polypeptide: Calcium-binding protein NCS-1 (190 aa).

Glycine 2 carries N-myristoyl glycine lipidation. EF-hand domains follow at residues 40-58 (SGHL…FFPF), 60-95 (DPSA…TSRG), 96-131 (ELND…IYKM), and 144-179 (TPEK…DPTI). 14 residues coordinate Ca(2+): aspartate 73, aspartate 75, asparagine 77, tyrosine 79, glutamate 84, aspartate 109, aspartate 111, asparagine 113, glutamate 120, aspartate 157, asparagine 159, aspartate 161, glutamine 163, and glutamate 168.

This sequence belongs to the recoverin family.

Its subcellular location is the membrane. Negatively regulates sporulation perhaps by controlling Ca(2+)-dependent desensitization of git3. The chain is Calcium-binding protein NCS-1 (ncs1) from Schizosaccharomyces pombe (strain 972 / ATCC 24843) (Fission yeast).